Here is a 101-residue protein sequence, read N- to C-terminus: Interleukin-8 (101 aa).

The signal sequence occupies residues 1–22 (MTSKLAVALLAAFLLSAALCEA). 2 disulfide bridges follow: Cys34-Cys61 and Cys36-Cys77.

The protein belongs to the intercrine alpha (chemokine CxC) family. In terms of assembly, homodimer. Interacts with TNFAIP6 (via Link domain); this interaction interferes with chemokine binding to glycosaminoglycans.

It is found in the secreted. Chemotactic factor that mediates inflammatory response by attracting neutrophils, basophils, and T-cells to clear pathogens and protect the host from infection. Also plays an important role in neutrophil activation. Released in response to an inflammatory stimulus, exerts its effect by binding to the G-protein-coupled receptors CXCR1 and CXCR2, primarily found in neutrophils, monocytes and endothelial cells. G-protein heterotrimer (alpha, beta, gamma subunits) constitutively binds to CXCR1/CXCR2 receptor and activation by IL8 leads to beta and gamma subunits release from Galpha (GNAI2 in neutrophils) and activation of several downstream signaling pathways including PI3K and MAPK pathways. This chain is Interleukin-8 (CXCL8), found in Bos taurus (Bovine).